A 693-amino-acid polypeptide reads, in one-letter code: CREB-regulated transcription coactivator 2 (693 aa).

A compositionally biased stretch (polar residues) spans 1–20; sequence MATSGANGPGSATASASNPR. The segment at 1 to 30 is disordered; sequence MATSGANGPGSATASASNPRKFSEKIALQK. Position 2 is an N-acetylalanine (alanine 2). At arginine 51 the chain carries Asymmetric dimethylarginine; by PRMT6. Serine 70, serine 86, and serine 90 each carry phosphoserine. An asymmetric dimethylarginine; by PRMT6 mark is found at arginine 99, arginine 120, and arginine 123. Phosphoserine is present on serine 136. An asymmetric dimethylarginine; by PRMT6 mark is found at arginine 161 and arginine 168. Threonine 169 carries the post-translational modification Phosphothreonine. The residue at position 171 (serine 171) is a Phosphoserine. Polar residues predominate over residues 174 to 188; the sequence is ALHTSVMNPSPQDTY. Residues 174 to 210 form a disordered region; sequence ALHTSVMNPSPQDTYPSPAAPSVLPSRRGGCLDGETD. The tract at residues 209-215 is required for interaction with COP1; the sequence is TDSKVPA. Lysine 234 is covalently cross-linked (Glycyl lysine isopeptide (Lys-Gly) (interchain with G-Cter in SUMO2)). Positions 271-287 match the Nuclear export signal motif; the sequence is TGGSLPDLTNLHFPPPL. Disordered regions lie at residues 271-307, 335-463, and 476-548; these read TGGSLPDLTNLHFPPPLPTPLDPEETAYPSLSGGSST, HSPL…SPTL, and KLPT…QSYH. The residue at position 274 (serine 274) is a Phosphoserine; by MARK2. Phosphoserine is present on serine 306. Positions 339-351 are enriched in polar residues; it reads SHPSFQSSLSNPN. Low complexity-rich tracts occupy residues 352–378 and 386–424; these read LQASLSSPQPQLQGSHSHPSLPASSLA and SLGHPSLSAPALSSSSSSSSASSPVLGAPAYPASAPGAS. Residues serine 368, serine 393, serine 433, and serine 456 each carry the phosphoserine modification. Over residues 447-463 the composition is skewed to polar residues; the sequence is SQQQLPKQFSPTMSPTL. Tyrosine 488 carries the post-translational modification Phosphotyrosine. Serine 489 and serine 492 each carry phosphoserine. Position 501 is a phosphothreonine (threonine 501). Residues serine 613 and serine 624 each carry the phosphoserine modification.

Belongs to the TORC family. Binds, as a tetramer, through its N-terminal region, with the bZIP domain of CREB1. 'Arg-314' in the bZIP domain of CREB1 is essential for this interaction. Interaction, via its C-terminal, with TAF4, enhances recruitment of TAF4 to CREB1. Interacts with SIK2. Interacts with 14-3-3 proteins, YWHAB and YWHAG. Interacts (probably when phosphorylated at Ser-171) with YWHAE. Interacts with calmodulin-dependent catalytic subunit PPP3CA/calcineurin A. Interaction with COP1 mediates nuclear export and degradation of CRTC2. In terms of processing, phosphorylation/dephosphorylation states of Ser-171 are required for regulating transduction of CREB activity. CRTCs/TORCs are inactive when phosphorylated, and active when dephosphorylated at this site. This primary site of phosphorylation, is regulated by cAMP and calcium levels and is dependent on the phosphorylation of SIKs (SIK1 and SIK2) by LKB1. Following adenylyl cyclase activation, dephosphorylated at Ser-171 by PPP3CA/calcineurin A resulting in CRTC2 dissociation from 14-3-3 proteins and PPP3CA. Both insulin and AMPK increase this phosphorylation of CRTC2 while glucagon suppresses it. Phosphorylation at Ser-274 by MARK2 is induced under low glucose conditions and dephosphorylated in response to glucose influx. Phosphorylation at Ser-274 promotes interaction with 14-3-3 proteins and translocation to the cytoplasm. Asymmetric dimethylation of arginine resisues by PRMT6 enhances the association of CRTC2 with CREB on the promoters of gluconeogenic genes.

It is found in the cytoplasm. Its subcellular location is the nucleus. Transcriptional coactivator for CREB1 which activates transcription through both consensus and variant cAMP response element (CRE) sites. Acts as a coactivator, in the SIK/TORC signaling pathway, being active when dephosphorylated and acts independently of CREB1 'Ser-133' phosphorylation. Enhances the interaction of CREB1 with TAF4. Regulates gluconeogenesis as a component of the LKB1/AMPK/TORC2 signaling pathway. Regulates the expression of specific genes such as the steroidogenic gene, StAR. Potent coactivator of PPARGC1A and inducer of mitochondrial biogenesis in muscle cells. The polypeptide is CREB-regulated transcription coactivator 2 (CRTC2) (Bos taurus (Bovine)).